Reading from the N-terminus, the 491-residue chain is Synaptotagmin-9 (491 aa).

The Vesicular segment spans residues 1–52 (MPGARDALCHQALQLLAELCARGALEHDSCQDFIYHLRDRARPRLRDPDISV). The cysteine motif stretch occupies residues 9-31 (CHQALQLLAELCARGALEHDSCQ). The chain crosses the membrane as a helical span at residues 53–73 (SLLTLVVTACGLALFGVSLFV). Residues 74-491 (SWKLCWVPWR…AHWHSLVEKR (418 aa)) are Cytoplasmic-facing. S177 carries the phosphoserine modification. C2 domains lie at 220-341 (ACGK…ILWK) and 352-485 (DLGE…AHWH). Ca(2+) contacts are provided by D251, D257, D309, F310, D311, S314, D317, D383, D389, D443, and D445.

It belongs to the synaptotagmin family. As to quaternary structure, homodimer; disulfide-linked via the cysteine motif. Can also form heterodimers with SYT3, SYT6, SYT7 and SYT10. It depends on Ca(2+) as a cofactor.

It localises to the cytoplasmic vesicle. It is found in the secretory vesicle. The protein localises to the synaptic vesicle membrane. Its function is as follows. May be involved in Ca(2+)-dependent exocytosis of secretory vesicles through Ca(2+) and phospholipid binding to the C2 domain or may serve as Ca(2+) sensors in the process of vesicular trafficking and exocytosis. The sequence is that of Synaptotagmin-9 (SYT9) from Homo sapiens (Human).